A 334-amino-acid chain; its full sequence is MMDTPEHASTSSRRQLLGMLAAGGTTAVAGCTTITGGGDTTSTGGGDSGSSSIVVGSKGYGEQVTLGYVAYELLANTTNATLVDETGFGGNAAISEAYRTGNVHAYYDYMGSLWSSHPPKHDSADFDTPDAQYDALKSEMESEHPIRILDRADWQNTWAVFVAERAVEGTGIQSISDLAAHVNSRNYDIRPAFGDGFRSRSDGLDALLDYYEFDPERVTAWASEREFLETASAQAAGTAVDEGYADLGVGYSTSAWLTDVDSVRVLDDDRNFWPFFHPVGVVHEDVATDAVVAALNTMPDAIPDAETMQALNSRAAASGNQQAAADHLQNNDFI.

A signal peptide spans 1-29 (MMDTPEHASTSSRRQLLGMLAAGGTTAVA).

It belongs to the OsmX family.

It is found in the cell membrane. In terms of biological role, mediates chemotaxis towards compatible osmolytes. May function as a receptor that binds the osmolytes and transduces a signal to CosT. Has probably no additional role in transport. This is Chemotactic signal transduction system substrate-binding protein CosB (cosB) from Halobacterium salinarum (strain ATCC 29341 / DSM 671 / R1).